We begin with the raw amino-acid sequence, 273 residues long: Homeobox protein Nkx-2.2 (273 aa).

2 disordered regions span residues 1–56 and 90–131; these read MSLT…LDAV and LAAG…KRKR. Acidic residues predominate over residues 20-38; it reads DTNDEEGSVAEGPEEENEG. A DNA-binding region (homeobox) is located at residues 128 to 187; it reads KRKRRVLFSKAQTYELERRFRQQRYLSAPEREHLASLIRLTPTQVKIWFQNHRYKMKRAR.

The protein belongs to the NK-2 homeobox family. As to quaternary structure, interacts with OLIG2.

The protein resides in the nucleus. Functionally, transcriptional activator involved in the development of insulin-producting beta cells in the endocrine pancreas. May also be involved in specifying diencephalic neuromeric boundaries, and in controlling the expression of genes that play a role in axonal guidance. Binds to elements within the NEUROD1 promoter. This Homo sapiens (Human) protein is Homeobox protein Nkx-2.2 (NKX2-2).